A 427-amino-acid polypeptide reads, in one-letter code: MTEAMKITLSTQPADARWGEKATYSINNDGITLHLNGADDLGLIQRAARKIDGLGIKHVQLSGEDWDADRCWAFWQGYKAPKGTRKVEWPDLDDAQRQELDNRLMIIDWVRDTINAPAEELGPSQLAQRAVDLISNVAGDRVTYRITKGEDLRDQGYMGLHTVGRGSERSPVLLALDYNPTGDKEAPVYACLVGKGITFDSGGYSIKQTAFMDSMKSDMGGAATVTGALAFAITRGLNKRVKLFLCCADNLISGNAFKLGDIITYRNGKKVEVMNTDAEGRLVLADGLIDASAQKPELIIDAATLTGAAKTALGNDYHALFSFDDALAARLLASASQENEPFWRLPLAEFHRSQLPSNFAELNNTGSAAYPAGASTAAGFLSHFVENYQQGWLHIDCSATYRKAPVEQWSAGATGLGVRTIANLLTA.

Mn(2+) is bound by residues K195 and D200. K207 is an active-site residue. 3 residues coordinate Mn(2+): D218, D277, and E279. Residue R281 is part of the active site.

Belongs to the peptidase M17 family. As to quaternary structure, homohexamer. The cofactor is Mn(2+).

Its subcellular location is the cytoplasm. The enzyme catalyses Release of an N-terminal amino acid, Xaa, from a peptide or arylamide. Xaa is preferably Glu or Asp but may be other amino acids, including Leu, Met, His, Cys and Gln.. In terms of biological role, probably plays an important role in intracellular peptide degradation. The chain is Peptidase B from Escherichia coli O7:K1 (strain IAI39 / ExPEC).